Here is a 153-residue protein sequence, read N- to C-terminus: 3-hydroxyacyl-[acyl-carrier-protein] dehydratase FabZ (153 aa).

H47 is an active-site residue.

The protein belongs to the thioester dehydratase family. FabZ subfamily.

It localises to the cytoplasm. The catalysed reaction is a (3R)-hydroxyacyl-[ACP] = a (2E)-enoyl-[ACP] + H2O. In terms of biological role, involved in unsaturated fatty acids biosynthesis. Catalyzes the dehydration of short chain beta-hydroxyacyl-ACPs and long chain saturated and unsaturated beta-hydroxyacyl-ACPs. This is 3-hydroxyacyl-[acyl-carrier-protein] dehydratase FabZ from Myxococcus xanthus (strain DK1622).